Reading from the N-terminus, the 354-residue chain is E2F transcription factor-like E2FF (354 aa).

A DNA-binding region spans residues 21-86 (RKEKSLGVLV…RGKNQYSWKG (66 aa)). Residues 104-143 (ERLGYSSSNNSDKVSNGCEREEPLTLTPDDQENSSSSKMD) are disordered. Residues 108 to 117 (YSSSNNSDKV) show a composition bias toward polar residues. The DNA-binding element occupies 145–225 (KKEKSLWLLA…TRKPAYRWLG (81 aa)).

Belongs to the E2F/DP family. In terms of tissue distribution, high expression in young cotyledons and leaves, hypocotyls, shoot apical meristem, roots and mature pollen grains, moderate in developing trichomes, flowers and at early stages of developing anthers, and barely detectable in mature leaves. Not detected in primary root meristem, emerging lateral roots, pistils, developing embryos and siliques.

Its subcellular location is the nucleus. The protein localises to the cytoplasm. In terms of biological role, inhibitor of E2F-dependent activation of gene expression. Binds specifically the E2 recognition site without interacting with DP proteins and prevents transcription activation by E2F/DP heterodimers. Does not bind retinoblastoma-related proteins. Acts as a growth regulator but is not associated with changes in the expression of cell cycle marker genes or in nuclear ploidy levels. Has no effect on cell proliferation, but may repress cell wall biosynthesis genes during cell elongation in differentiated cells. The polypeptide is E2F transcription factor-like E2FF (E2FF) (Arabidopsis thaliana (Mouse-ear cress)).